The sequence spans 436 residues: Adenosylmethionine-8-amino-7-oxononanoate aminotransferase (436 aa).

W66 provides a ligand contact to substrate. Pyridoxal 5'-phosphate is bound at residue 126 to 127; sequence GS. Position 159 (Y159) interacts with substrate. D256 is a pyridoxal 5'-phosphate binding site. Substrate-binding residues include K285 and G318. K285 carries the N6-(pyridoxal phosphate)lysine modification. 319–320 contacts pyridoxal 5'-phosphate; sequence PT. R402 is a substrate binding site.

This sequence belongs to the class-III pyridoxal-phosphate-dependent aminotransferase family. BioA subfamily. Homodimer. Requires pyridoxal 5'-phosphate as cofactor.

The protein localises to the cytoplasm. It catalyses the reaction (8S)-8-amino-7-oxononanoate + S-adenosyl-L-methionine = S-adenosyl-4-methylsulfanyl-2-oxobutanoate + (7R,8S)-7,8-diammoniononanoate. The protein operates within cofactor biosynthesis; biotin biosynthesis; 7,8-diaminononanoate from 8-amino-7-oxononanoate (SAM route): step 1/1. Its function is as follows. Catalyzes the transfer of the alpha-amino group from S-adenosyl-L-methionine (SAM) to 7-keto-8-aminopelargonic acid (KAPA) to form 7,8-diaminopelargonic acid (DAPA). It is the only aminotransferase known to utilize SAM as an amino donor. The protein is Adenosylmethionine-8-amino-7-oxononanoate aminotransferase of Mycobacterium leprae (strain TN).